Consider the following 281-residue polypeptide: Large ribosomal subunit protein uL2 (281 aa).

Residues 208 to 281 (AGRSRYAGQR…RGRKRGPHTR (74 aa)) are disordered. The segment covering 254–281 (TVGKKTRSHKARSNKFIVRGRKRGPHTR) has biased composition (basic residues).

This sequence belongs to the universal ribosomal protein uL2 family. Part of the 50S ribosomal subunit. Forms a bridge to the 30S subunit in the 70S ribosome.

Its function is as follows. One of the primary rRNA binding proteins. Required for association of the 30S and 50S subunits to form the 70S ribosome, for tRNA binding and peptide bond formation. It has been suggested to have peptidyltransferase activity; this is somewhat controversial. Makes several contacts with the 16S rRNA in the 70S ribosome. This chain is Large ribosomal subunit protein uL2, found in Limosilactobacillus fermentum (strain NBRC 3956 / LMG 18251) (Lactobacillus fermentum).